The sequence spans 609 residues: Forkhead box protein O (609 aa).

2 disordered regions span residues 1–89 (MDGF…KNSS) and 181–263 (KSVR…SSCG). Threonine 43 carries the phosphothreonine; by PKB/AKT1 modification. Residues 62–79 (TKASNQQLASGDPQQAMQ) show a composition bias toward polar residues. Over residues 80-89 (NANAAKKNSS) the composition is skewed to low complexity. Positions 94–200 (WGNLSYADLI…ETSRYEKRRG (107 aa)) form a DNA-binding region, fork-head. Position 189 is a phosphoserine; by PKB/AKT1 (serine 189). Composition is skewed to polar residues over residues 220-229 (ATPSPSSSVS) and 254-263 (RASSNASSCG). Position 257 is a phosphoserine; by PKB/AKT1 (serine 257). 3 positions are modified to phosphoserine: serine 260, serine 261, and serine 266. 2 disordered regions span residues 321-365 (AASG…QGQG) and 384-411 (RDGL…DSLN). The span at 327–339 (TQPPPPYQPPQQP) shows a compositional bias: pro residues. Over residues 388–397 (SPNSVTTTMS) the composition is skewed to polar residues.

Interacts with melt.

The protein localises to the cytoplasm. Its subcellular location is the nucleus. Its function is as follows. Transcription factor involved in the regulation of the insulin signaling pathway. Consistently activates both the downstream target Thor\d4EBP and the feedback control target InR. Involved in negative regulation of the cell cycle, modulating cell growth and proliferation. In response to cellular stresses, such as nutrient deprivation or increased levels of reactive oxygen species, foxo is activated and inhibits growth through the action of target genes such as Thor. Foxo activated in the adult fat body can regulate lifespan in adults; an insulin peptide itself may function as one secondary messenger of insulin-regulated aging. Also regulates Lip4, homolog of human acid lipases, thereby acting as a key modulator of lipid metabolism by insulin signaling and integrates insulin responses to glucose and lipid homeostasis. The chain is Forkhead box protein O from Drosophila virilis (Fruit fly).